Consider the following 76-residue polypeptide: Acyl carrier protein (76 aa).

Residues 1–74 (MFDKLKEIIA…DVVEYITEHT (74 aa)) enclose the Carrier domain. The residue at position 34 (Ser34) is an O-(pantetheine 4'-phosphoryl)serine.

The protein belongs to the acyl carrier protein (ACP) family. 4'-phosphopantetheine is transferred from CoA to a specific serine of apo-ACP by AcpS. This modification is essential for activity because fatty acids are bound in thioester linkage to the sulfhydryl of the prosthetic group.

The protein localises to the cytoplasm. It functions in the pathway lipid metabolism; fatty acid biosynthesis. Carrier of the growing fatty acid chain in fatty acid biosynthesis. The polypeptide is Acyl carrier protein (Clostridium perfringens (strain ATCC 13124 / DSM 756 / JCM 1290 / NCIMB 6125 / NCTC 8237 / Type A)).